Consider the following 411-residue polypeptide: ATP-dependent Clp protease ATP-binding subunit ClpX (411 aa).

The 49-residue stretch at 1–49 folds into the ClpX-type ZB domain; sequence MSDKNIRCSFCGRTQKEVKKLIAGPGVYICDECVKLAYDIIEEEDSEEI. 4 residues coordinate Zn(2+): cysteine 8, cysteine 11, cysteine 30, and cysteine 33. 115 to 122 serves as a coordination point for ATP; sequence PTGVGKTL.

This sequence belongs to the ClpX chaperone family. Component of the ClpX-ClpP complex. Forms a hexameric ring that, in the presence of ATP, binds to fourteen ClpP subunits assembled into a disk-like structure with a central cavity, resembling the structure of eukaryotic proteasomes.

ATP-dependent specificity component of the Clp protease. It directs the protease to specific substrates. Can perform chaperone functions in the absence of ClpP. The polypeptide is ATP-dependent Clp protease ATP-binding subunit ClpX (Dictyoglomus turgidum (strain DSM 6724 / Z-1310)).